The primary structure comprises 551 residues: Adenine deaminase (551 aa).

The protein belongs to the metallo-dependent hydrolases superfamily. Adenine deaminase family. It depends on Mn(2+) as a cofactor.

It carries out the reaction adenine + H2O + H(+) = hypoxanthine + NH4(+). The chain is Adenine deaminase from Methanosarcina barkeri (strain Fusaro / DSM 804).